Reading from the N-terminus, the 205-residue chain is Putative 3-methyladenine DNA glycosylase (205 aa).

This sequence belongs to the DNA glycosylase MPG family.

This chain is Putative 3-methyladenine DNA glycosylase, found in Bacillus cereus (strain Q1).